The following is a 573-amino-acid chain: Sulfite reductase [NADPH] hemoprotein beta-component (573 aa).

[4Fe-4S] cluster is bound by residues Cys438, Cys444, Cys483, and Cys487. Cys487 contributes to the siroheme binding site.

Belongs to the nitrite and sulfite reductase 4Fe-4S domain family. As to quaternary structure, alpha(8)-beta(8). The alpha component is a flavoprotein, the beta component is a hemoprotein. Requires siroheme as cofactor. [4Fe-4S] cluster is required as a cofactor.

It carries out the reaction hydrogen sulfide + 3 NADP(+) + 3 H2O = sulfite + 3 NADPH + 4 H(+). Its pathway is sulfur metabolism; hydrogen sulfide biosynthesis; hydrogen sulfide from sulfite (NADPH route): step 1/1. Functionally, component of the sulfite reductase complex that catalyzes the 6-electron reduction of sulfite to sulfide. This is one of several activities required for the biosynthesis of L-cysteine from sulfate. The polypeptide is Sulfite reductase [NADPH] hemoprotein beta-component (Shouchella clausii (strain KSM-K16) (Alkalihalobacillus clausii)).